The sequence spans 338 residues: Fructose-1,6-bisphosphatase class 1 (338 aa).

4 residues coordinate Mg(2+): E92, D115, L117, and D118. Substrate is bound by residues 118-121 (DGSS), N211, Y244, 262-264 (YLY), and K274. Mg(2+) is bound at residue E280.

This sequence belongs to the FBPase class 1 family. Homotetramer. The cofactor is Mg(2+).

It localises to the cytoplasm. The catalysed reaction is beta-D-fructose 1,6-bisphosphate + H2O = beta-D-fructose 6-phosphate + phosphate. It functions in the pathway carbohydrate biosynthesis; gluconeogenesis. In Vibrio parahaemolyticus serotype O3:K6 (strain RIMD 2210633), this protein is Fructose-1,6-bisphosphatase class 1.